Reading from the N-terminus, the 519-residue chain is AarF domain-containing protein kinase 1 (519 aa).

The 337-residue stretch at 145–481 (SFEDTPLGAA…SLYRRVHISL (337 aa)) folds into the Protein kinase domain. ATP contacts are provided by residues 151 to 159 (LGAASLAQV) and Lys-173. Asp-305 (proton acceptor) is an active-site residue.

It belongs to the protein kinase superfamily. ADCK protein kinase family.

The protein localises to the mitochondrion. Its function is as follows. Appears to be essential for maintaining mitochondrial cristae formation and mitochondrial function by acting via YME1L1 in a kinase-independent manner to regulate essential mitochondrial structural proteins OPA1 and IMMT. The action of this enzyme is not yet clear. It is not known if it has protein kinase activity and what type of substrate it would phosphorylate (Ser, Thr or Tyr). The protein is AarF domain-containing protein kinase 1 (ADCK1) of Gallus gallus (Chicken).